The sequence spans 284 residues: 2,3,4,5-tetrahydropyridine-2,6-dicarboxylate N-succinyltransferase (284 aa).

The substrate site is built by Arg-111 and Asp-148.

Belongs to the transferase hexapeptide repeat family. In terms of assembly, homotrimer.

The protein localises to the cytoplasm. The enzyme catalyses (S)-2,3,4,5-tetrahydrodipicolinate + succinyl-CoA + H2O = (S)-2-succinylamino-6-oxoheptanedioate + CoA. It participates in amino-acid biosynthesis; L-lysine biosynthesis via DAP pathway; LL-2,6-diaminopimelate from (S)-tetrahydrodipicolinate (succinylase route): step 1/3. The chain is 2,3,4,5-tetrahydropyridine-2,6-dicarboxylate N-succinyltransferase from Ehrlichia ruminantium (strain Gardel).